A 122-amino-acid chain; its full sequence is Large ribosomal subunit protein bL12 (122 aa).

It belongs to the bacterial ribosomal protein bL12 family. As to quaternary structure, homodimer. Part of the ribosomal stalk of the 50S ribosomal subunit. Forms a multimeric L10(L12)X complex, where L10 forms an elongated spine to which 2 to 4 L12 dimers bind in a sequential fashion. Binds GTP-bound translation factors.

Functionally, forms part of the ribosomal stalk which helps the ribosome interact with GTP-bound translation factors. Is thus essential for accurate translation. In Levilactobacillus brevis (strain ATCC 367 / BCRC 12310 / CIP 105137 / JCM 1170 / LMG 11437 / NCIMB 947 / NCTC 947) (Lactobacillus brevis), this protein is Large ribosomal subunit protein bL12.